A 281-amino-acid chain; its full sequence is 3-hydroxyanthranilate 3,4-dioxygenase (281 aa).

Residues 1–162 (MSGVTAIEIP…SNEFKTGKPG (162 aa)) are domain A (catalytic). Residue Arg45 coordinates O2. Residues His49, Glu55, and His93 each coordinate Fe cation. Glu55 is a binding site for substrate. Residues Arg97 and Glu107 each contribute to the substrate site. Residues 163-179 (KGTFACNAPYEARWTDL) form a linker region. Positions 180–281 (PVPINRKEFI…GFAITIRMPA (102 aa)) are domain B.

Belongs to the 3-HAO family. Requires Fe(2+) as cofactor.

It is found in the cytoplasm. The catalysed reaction is 3-hydroxyanthranilate + O2 = (2Z,4Z)-2-amino-3-carboxymuconate 6-semialdehyde. It functions in the pathway cofactor biosynthesis; NAD(+) biosynthesis; quinolinate from L-kynurenine: step 3/3. Functionally, catalyzes the oxidative ring opening of 3-hydroxyanthranilate to 2-amino-3-carboxymuconate semialdehyde, which spontaneously cyclizes to quinolinate. This Caenorhabditis elegans protein is 3-hydroxyanthranilate 3,4-dioxygenase (haao-1).